We begin with the raw amino-acid sequence, 266 residues long: 3-methyl-2-oxobutanoate hydroxymethyltransferase (266 aa).

2 residues coordinate Mg(2+): Asp45 and Asp84. Residues 45–46 (DS), Asp84, and Lys113 contribute to the 3-methyl-2-oxobutanoate site. Glu115 provides a ligand contact to Mg(2+). Glu183 acts as the Proton acceptor in catalysis.

It belongs to the PanB family. As to quaternary structure, homodecamer; pentamer of dimers. Mg(2+) is required as a cofactor.

The protein localises to the cytoplasm. The catalysed reaction is 3-methyl-2-oxobutanoate + (6R)-5,10-methylene-5,6,7,8-tetrahydrofolate + H2O = 2-dehydropantoate + (6S)-5,6,7,8-tetrahydrofolate. It functions in the pathway cofactor biosynthesis; (R)-pantothenate biosynthesis; (R)-pantoate from 3-methyl-2-oxobutanoate: step 1/2. In terms of biological role, catalyzes the reversible reaction in which hydroxymethyl group from 5,10-methylenetetrahydrofolate is transferred onto alpha-ketoisovalerate to form ketopantoate. The sequence is that of 3-methyl-2-oxobutanoate hydroxymethyltransferase from Coxiella burnetii (strain CbuK_Q154) (Coxiella burnetii (strain Q154)).